The following is a 1267-amino-acid chain: BOS complex subunit NOMO2 (1267 aa).

The signal sequence occupies residues 1–31; sequence MLVGQGAGLLGPAVVTAAVVLLLSGVGPAHG. The Lumenal portion of the chain corresponds to 32–1155; it reads SEDIVVGCGG…NPTRKLPEQD (1124 aa). Asparagine 50, asparagine 218, and asparagine 618 each carry an N-linked (GlcNAc...) asparagine glycan. Residues 1156–1176 form a helical membrane-spanning segment; the sequence is IAQGSYIALPLTLLVLLAGYN. The Cytoplasmic portion of the chain corresponds to 1177 to 1267; the sequence is HDKLIPLLLQ…LETTATCIHY (91 aa). The interval 1198–1219 is disordered; that stretch reads GQAASDNSGPEDAKRQAKKQKT.

As to quaternary structure, component of the back of Sec61 (BOS) complex, composed of NCLN/Nicalin, NOMO (NOMO1, NOMO2 or NOMO3) and TMEM147. The BOS complex is part of the multi-pass translocon (MPT) complex, composed of three subcomplexes, the GEL complex (composed of RAB5IF/OPTI and TMCO1), the BOS complex (composed of NCLN/Nicalin, NOMO and TMEM147) and the PAT complex (composed of WDR83OS/Asterix and CCDC47). The MPT complex associates with the SEC61 complex. Due to the strong similarity between NOMO1, NOMO2 and NOMO3, similar interaction pattern probably occur for the three gene copies. In terms of tissue distribution, highly expressed in pancreas and skeletal muscle and, at lower levels, in heart.

The protein resides in the endoplasmic reticulum membrane. Its function is as follows. Component of the multi-pass translocon (MPT) complex that mediates insertion of multi-pass membrane proteins into the lipid bilayer of membranes. The MPT complex takes over after the SEC61 complex: following membrane insertion of the first few transmembrane segments of proteins by the SEC61 complex, the MPT complex occludes the lateral gate of the SEC61 complex to promote insertion of subsequent transmembrane regions. In Homo sapiens (Human), this protein is BOS complex subunit NOMO2 (NOMO2).